A 409-amino-acid polypeptide reads, in one-letter code: L-cysteine:1D-myo-inositol 2-amino-2-deoxy-alpha-D-glucopyranoside ligase (409 aa).

The segment at 1–27 (MHAWPASEVPALPGQGRDLRIHDTATG) is disordered. Position 43 (C43) interacts with Zn(2+). L-cysteinyl-5'-AMP is bound by residues 43–46 (CGIT), T58, and 81–83 (NVT). The 'HIGH' region signature appears at 45 to 55 (ITPYDATHMGH). Positions 183 to 188 (ERGGDP) match the 'ERGGDP' region motif. Residue W224 participates in L-cysteinyl-5'-AMP binding. Position 228 (C228) interacts with Zn(2+). An L-cysteinyl-5'-AMP-binding site is contributed by 246–248 (GSD). H253 contacts Zn(2+). V280 serves as a coordination point for L-cysteinyl-5'-AMP. Residues 286-290 (KMSKS) carry the 'KMSKS' region motif.

The protein belongs to the class-I aminoacyl-tRNA synthetase family. MshC subfamily. As to quaternary structure, monomer. Requires Zn(2+) as cofactor.

It carries out the reaction 1D-myo-inositol 2-amino-2-deoxy-alpha-D-glucopyranoside + L-cysteine + ATP = 1D-myo-inositol 2-(L-cysteinylamino)-2-deoxy-alpha-D-glucopyranoside + AMP + diphosphate + H(+). Its function is as follows. Catalyzes the ATP-dependent condensation of GlcN-Ins and L-cysteine to form L-Cys-GlcN-Ins. This Streptomyces coelicolor (strain ATCC BAA-471 / A3(2) / M145) protein is L-cysteine:1D-myo-inositol 2-amino-2-deoxy-alpha-D-glucopyranoside ligase (mshC).